The chain runs to 405 residues: Chorismate synthase (405 aa).

NADP(+)-binding residues include R43 and R49. FMN contacts are provided by residues 138-140 (RAS) and 259-260 (QA). Basic and acidic residues predominate over residues 275–286 (RRGSQAHDEMRP). A disordered region spans residues 275 to 308 (RRGSQAHDEMRPGPDGVLRSTNRAGGLEGGMTNG). FMN contacts are provided by residues G303, 318 to 322 (KPIST), and R344.

This sequence belongs to the chorismate synthase family. As to quaternary structure, homotetramer. FMNH2 is required as a cofactor.

It catalyses the reaction 5-O-(1-carboxyvinyl)-3-phosphoshikimate = chorismate + phosphate. The protein operates within metabolic intermediate biosynthesis; chorismate biosynthesis; chorismate from D-erythrose 4-phosphate and phosphoenolpyruvate: step 7/7. In terms of biological role, catalyzes the anti-1,4-elimination of the C-3 phosphate and the C-6 proR hydrogen from 5-enolpyruvylshikimate-3-phosphate (EPSP) to yield chorismate, which is the branch point compound that serves as the starting substrate for the three terminal pathways of aromatic amino acid biosynthesis. This reaction introduces a second double bond into the aromatic ring system. In Nocardia farcinica (strain IFM 10152), this protein is Chorismate synthase.